A 279-amino-acid polypeptide reads, in one-letter code: Energy-coupling factor transporter ATP-binding protein EcfA1 (279 aa).

In terms of domain architecture, ABC transporter spans 6 to 240 (VRLEHVFYKY…ADAMRAIGLG (235 aa)). Residue 40 to 47 (GHNGSGKS) participates in ATP binding.

Belongs to the ABC transporter superfamily. Energy-coupling factor EcfA family. Forms a stable energy-coupling factor (ECF) transporter complex composed of 2 membrane-embedded substrate-binding proteins (S component), 2 ATP-binding proteins (A component) and 2 transmembrane proteins (T component).

It is found in the cell membrane. Functionally, ATP-binding (A) component of a common energy-coupling factor (ECF) ABC-transporter complex. Unlike classic ABC transporters this ECF transporter provides the energy necessary to transport a number of different substrates. The sequence is that of Energy-coupling factor transporter ATP-binding protein EcfA1 from Listeria innocua serovar 6a (strain ATCC BAA-680 / CLIP 11262).